A 157-amino-acid chain; its full sequence is Tripartite terminase subunit 2 (157 aa).

The interval 1 to 69 is disordered; the sequence is MSWAKQRVPF…DGEDGHALPD (69 aa). The segment covering 11–27 has biased composition (acidic residues); that stretch reads LDDDDGEEENDVQDDVD.

Belongs to the herpesviridae TRM2 protein family. In terms of assembly, associates with TRM1 and TRM3 to form the tripartite terminase complex.

The protein localises to the host nucleus. Its function is as follows. Component of the molecular motor that translocates viral genomic DNA in empty capsid during DNA packaging. Forms a tripartite terminase complex together with TRM1 and TRM3 in the host cytoplasm. Once the complex reaches the host nucleus, it interacts with the capsid portal vertex. This portal forms a ring in which genomic DNA is translocated into the capsid. The polypeptide is Tripartite terminase subunit 2 (Homo sapiens (Human)).